We begin with the raw amino-acid sequence, 207 residues long: Enolase (207 aa).

Glutamine 162 is a binding site for (2R)-2-phosphoglycerate. Glutamate 204 (proton donor) is an active-site residue.

This sequence belongs to the enolase family.

It localises to the cytoplasm. Its subcellular location is the secreted. It is found in the cell surface. The enzyme catalyses (2R)-2-phosphoglycerate = phosphoenolpyruvate + H2O. The protein operates within carbohydrate degradation; glycolysis; pyruvate from D-glyceraldehyde 3-phosphate: step 4/5. Functionally, catalyzes the reversible conversion of 2-phosphoglycerate (2-PG) into phosphoenolpyruvate (PEP). It is essential for the degradation of carbohydrates via glycolysis. This is Enolase from Campylobacter fetus.